The chain runs to 346 residues: Mitogen-activated protein kinase kinase 1c (346 aa).

Residues 70–332 enclose the Protein kinase domain; that stretch reads LELVRFLGKG…TTDLLKHPFL (263 aa). Residues 76–84 and lysine 99 each bind ATP; that span reads LGKGAGGTV. Aspartate 194 (proton acceptor) is an active-site residue.

This sequence belongs to the protein kinase superfamily. STE Ser/Thr protein kinase family. MAP kinase kinase subfamily.

It carries out the reaction L-seryl-[protein] + ATP = O-phospho-L-seryl-[protein] + ADP + H(+). The catalysed reaction is L-threonyl-[protein] + ATP = O-phospho-L-threonyl-[protein] + ADP + H(+). The enzyme catalyses L-tyrosyl-[protein] + ATP = O-phospho-L-tyrosyl-[protein] + ADP + H(+). In terms of biological role, the CERK1, MEKK1a/b, MKK1a/b/c and MPK4a/b proteins are involved in pathogen defense. The pathway induces rapid growth inhibition, cell wall depositions and accumulation of defense-related transcripts. This protein is required for full defense response to fungal pathogen chitin. This chain is Mitogen-activated protein kinase kinase 1c, found in Physcomitrium patens (Spreading-leaved earth moss).